Reading from the N-terminus, the 88-residue chain is MPKHSPPDTSPVARFEQSLQELEQLVQNMETGALSLEQSLGAYERGIALYRECHQALEQAQLRVRILSDPMRPDDGEPFDPSIVSTSQ.

Positions 69–88 are disordered; that stretch reads DPMRPDDGEPFDPSIVSTSQ.

This sequence belongs to the XseB family. In terms of assembly, heterooligomer composed of large and small subunits.

The protein localises to the cytoplasm. The catalysed reaction is Exonucleolytic cleavage in either 5'- to 3'- or 3'- to 5'-direction to yield nucleoside 5'-phosphates.. Bidirectionally degrades single-stranded DNA into large acid-insoluble oligonucleotides, which are then degraded further into small acid-soluble oligonucleotides. The chain is Exodeoxyribonuclease 7 small subunit from Xylella fastidiosa (strain M12).